A 480-amino-acid chain; its full sequence is Argininosuccinate lyase (480 aa).

The span at 1 to 17 (MTDTTPSADLGASSQQP) shows a compositional bias: polar residues. Residues 1–24 (MTDTTPSADLGASSQQPAKAWSGR) form a disordered region.

The protein belongs to the lyase 1 family. Argininosuccinate lyase subfamily.

It localises to the cytoplasm. It catalyses the reaction 2-(N(omega)-L-arginino)succinate = fumarate + L-arginine. It participates in amino-acid biosynthesis; L-arginine biosynthesis; L-arginine from L-ornithine and carbamoyl phosphate: step 3/3. The protein is Argininosuccinate lyase of Azoarcus sp. (strain BH72).